The following is a 346-amino-acid chain: ATP-dependent (S)-NAD(P)H-hydrate dehydratase 2 (346 aa).

The tract at residues 1–20 (MMVHSPLATGPHPTTHLEPT) is disordered. The YjeF C-terminal domain maps to 28 to 339 (LLRKAFQMIP…GYIGEAFEQV (312 aa)). Residues Gly135 and 188 to 194 (NHVEFQR) each bind (6S)-NADPHX. ATP-binding positions include 228–232 (KGSID) and 248–257 (GSPKRCGGQG). Asp258 contributes to the (6S)-NADPHX binding site.

Belongs to the NnrD/CARKD family. It depends on Mg(2+) as a cofactor.

It localises to the cytoplasm. The catalysed reaction is (6S)-NADHX + ATP = ADP + phosphate + NADH + H(+). It carries out the reaction (6S)-NADPHX + ATP = ADP + phosphate + NADPH + H(+). Its function is as follows. Catalyzes the dehydration of the S-form of NAD(P)HX at the expense of ATP, which is converted to ADP. Together with NAD(P)HX epimerase, which catalyzes the epimerization of the S- and R-forms, the enzyme allows the repair of both epimers of NAD(P)HX, a damaged form of NAD(P)H that is a result of enzymatic or heat-dependent hydration. The sequence is that of ATP-dependent (S)-NAD(P)H-hydrate dehydratase 2 from Puccinia graminis f. sp. tritici (strain CRL 75-36-700-3 / race SCCL) (Black stem rust fungus).